A 78-amino-acid chain; its full sequence is Spermatid-specific protein T1 (78 aa).

The segment at 1-21 (MKVAANSSKMLAEKLELMKGG) is hydrophobic. The segment at 1-78 (MKVAANSSKM…YSRRRYRRRR (78 aa)) is disordered. The segment covering 20 to 78 (GGRRRRRRSRRRRRRSRRRSRSPYRRRYRRRRRRRRRRSRRRRYRRRRSYSRRRYRRRR) has biased composition (basic residues).

Phosphorylation occurs at different degrees. The triphosphorylated form may be predominant in T1. SP1 appears to be phosphorylated in elongated spermatids, but dephosphorylated in mature sperm cells. As to expression, testis.

The protein localises to the nucleus. Its subcellular location is the chromosome. Functionally, cuttlefish spermiogenesis is characterized by a double nuclear protein transition: histones -&gt; spermatid-specific proteins (T1/T2) -&gt; protamines (SP1/SP2). The protamines compact sperm DNA into a highly condensed, stable and inactive complex. The sequence is that of Spermatid-specific protein T1 from Sepia officinalis (Common cuttlefish).